The chain runs to 517 residues: MFS-type transporter avaJ (517 aa).

Residues 1-12 (MTSPEHSEDERQ) show a composition bias toward basic and acidic residues. A disordered region spans residues 1–28 (MTSPEHSEDERQPLLTKPSGPDESQSGF). The chain crosses the membrane as a helical span at residues 40 to 60 (AMWLLPMYTLYAITAGSLIIP). Asparagine 63 carries an N-linked (GlcNAc...) asparagine glycan. 5 helical membrane-spanning segments follow: residues 103–123 (IYGT…LMGF), 131–151 (PILL…LAAL), 161–181 (WLLV…ATTA), 204–224 (AAFT…LSVF), and 230–250 (AYWL…LALP). The N-linked (GlcNAc...) asparagine glycan is linked to asparagine 265. A run of 5 helical transmembrane segments spans residues 299 to 319 (MYIV…LVPL), 338 to 358 (FLTG…PLFM), 391 to 411 (LLLQ…LGVI), 442 to 462 (VLLG…PSGM), and 476 to 496 (ALFA…MFIG). 2 N-linked (GlcNAc...) asparagine glycosylation sites follow: asparagine 497 and asparagine 512.

The protein belongs to the major facilitator superfamily. TCR/Tet family.

It is found in the membrane. It functions in the pathway secondary metabolite biosynthesis. Functionally, MFS-type transporter; part of the cluster that mediates the biosynthesis of a highly modified cyclo-arginine-tryptophan dipeptide (cRW). This is MFS-type transporter avaJ from Aspergillus versicolor.